The sequence spans 338 residues: Phenylalanine--tRNA ligase alpha subunit (338 aa).

Glu252 provides a ligand contact to Mg(2+).

Belongs to the class-II aminoacyl-tRNA synthetase family. Phe-tRNA synthetase alpha subunit type 1 subfamily. As to quaternary structure, tetramer of two alpha and two beta subunits. Mg(2+) is required as a cofactor.

Its subcellular location is the cytoplasm. It catalyses the reaction tRNA(Phe) + L-phenylalanine + ATP = L-phenylalanyl-tRNA(Phe) + AMP + diphosphate + H(+). In Pseudomonas entomophila (strain L48), this protein is Phenylalanine--tRNA ligase alpha subunit.